Reading from the N-terminus, the 256-residue chain is DNA repair protein RecO (256 aa).

The protein belongs to the RecO family.

Functionally, involved in DNA repair and RecF pathway recombination. The polypeptide is DNA repair protein RecO (Shouchella clausii (strain KSM-K16) (Alkalihalobacillus clausii)).